The chain runs to 148 residues: Leghemoglobin 3 (148 aa).

The Globin domain occupies 2–148 (GFTEKQEALV…LSAAIKKAMS (147 aa)). Nitrated tyrosine is present on Tyr30. Heme b is bound at residue Ser45. At Ser45 the chain carries Phosphoserine. His63 serves as a coordination point for O2. Heme b is bound by residues Lys66, His95, and Lys98. Tyr136 carries the nitrated tyrosine modification.

This sequence belongs to the plant globin family. In terms of assembly, monomer. Post-translationally, nitrated in effective nodules and particularly in hypoxic conditions; this mechanism may play a protective role in the symbiosis by buffering toxic peroxynitrite NO(2)(-). Nitration level decrease during nodule senescence. In terms of processing, phosphorylation at Ser-45 disrupts the molecular environment of its porphyrin ring oxygen binding pocket, thus leading to a reduced oxygen consumption and to the delivery of oxygen O(2) to symbiosomes. In terms of tissue distribution, stem nodules.

The protein resides in the cytoplasm. It localises to the cytosol. It is found in the nucleus. Functionally, leghemoglobin that reversibly binds oxygen O(2) through a pentacoordinated heme iron. In stem nodules, facilitates the diffusion of oxygen to the bacteroids while preventing the bacterial nitrogenase from being inactivated by buffering dioxygen, nitric oxide and carbon monoxide, and promoting the formation of reactive oxygen species (ROS, e.g. H(2)O(2)). This role is essential for symbiotic nitrogen fixation (SNF). The protein is Leghemoglobin 3 of Sesbania rostrata.